A 607-amino-acid polypeptide reads, in one-letter code: Elongation factor 4 (607 aa).

A tr-type G domain is found at 11 to 193 (ENIRNFSIIA…KIVEVVPAPD (183 aa)). GTP-binding positions include 23–28 (DHGKST) and 140–143 (NKID).

It belongs to the TRAFAC class translation factor GTPase superfamily. Classic translation factor GTPase family. LepA subfamily.

The protein resides in the cell membrane. The catalysed reaction is GTP + H2O = GDP + phosphate + H(+). Required for accurate and efficient protein synthesis under certain stress conditions. May act as a fidelity factor of the translation reaction, by catalyzing a one-codon backward translocation of tRNAs on improperly translocated ribosomes. Back-translocation proceeds from a post-translocation (POST) complex to a pre-translocation (PRE) complex, thus giving elongation factor G a second chance to translocate the tRNAs correctly. Binds to ribosomes in a GTP-dependent manner. This Staphylococcus aureus (strain MW2) protein is Elongation factor 4.